Reading from the N-terminus, the 341-residue chain is tRNA N6-adenosine threonylcarbamoyltransferase (341 aa).

Fe cation contacts are provided by His-111 and His-115. Substrate contacts are provided by residues Leu-134 to Gly-138, Asp-167, Gly-180, and Asn-276. Asp-304 serves as a coordination point for Fe cation.

The protein belongs to the KAE1 / TsaD family. The cofactor is Fe(2+).

Its subcellular location is the cytoplasm. The enzyme catalyses L-threonylcarbamoyladenylate + adenosine(37) in tRNA = N(6)-L-threonylcarbamoyladenosine(37) in tRNA + AMP + H(+). Functionally, required for the formation of a threonylcarbamoyl group on adenosine at position 37 (t(6)A37) in tRNAs that read codons beginning with adenine. Is involved in the transfer of the threonylcarbamoyl moiety of threonylcarbamoyl-AMP (TC-AMP) to the N6 group of A37, together with TsaE and TsaB. TsaD likely plays a direct catalytic role in this reaction. This Pseudomonas aeruginosa (strain UCBPP-PA14) protein is tRNA N6-adenosine threonylcarbamoyltransferase.